Here is a 537-residue protein sequence, read N- to C-terminus: 2-succinyl-5-enolpyruvyl-6-hydroxy-3-cyclohexene-1-carboxylate synthase (537 aa).

Belongs to the TPP enzyme family. MenD subfamily. In terms of assembly, homodimer. It depends on Mg(2+) as a cofactor. Mn(2+) is required as a cofactor. Thiamine diphosphate serves as cofactor.

It carries out the reaction isochorismate + 2-oxoglutarate + H(+) = 5-enolpyruvoyl-6-hydroxy-2-succinyl-cyclohex-3-ene-1-carboxylate + CO2. It functions in the pathway quinol/quinone metabolism; 1,4-dihydroxy-2-naphthoate biosynthesis; 1,4-dihydroxy-2-naphthoate from chorismate: step 2/7. The protein operates within quinol/quinone metabolism; menaquinone biosynthesis. Functionally, catalyzes the thiamine diphosphate-dependent decarboxylation of 2-oxoglutarate and the subsequent addition of the resulting succinic semialdehyde-thiamine pyrophosphate anion to isochorismate to yield 2-succinyl-5-enolpyruvyl-6-hydroxy-3-cyclohexene-1-carboxylate (SEPHCHC). This Dechloromonas aromatica (strain RCB) protein is 2-succinyl-5-enolpyruvyl-6-hydroxy-3-cyclohexene-1-carboxylate synthase.